We begin with the raw amino-acid sequence, 203 residues long: Endo-type membrane-bound lytic murein transglycosylase A (203 aa).

A signal peptide spans 1–15; that stretch reads MKLRWFAFLIVLLAG. The N-palmitoyl cysteine moiety is linked to residue C16. A lipid anchor (S-diacylglycerol cysteine) is attached at C16.

Belongs to the transglycosylase Slt family.

Its subcellular location is the cell outer membrane. The enzyme catalyses Endolytic cleavage of the (1-&gt;4)-beta-glycosidic linkage between N-acetylmuramic acid (MurNAc) and N-acetylglucosamine (GlcNAc) residues in peptidoglycan with concomitant formation of a 1,6-anhydrobond in the MurNAc residue.. Murein-degrading enzyme. May play a role in recycling of muropeptides during cell elongation and/or cell division. Preferentially cleaves at a distance of more than two disaccharide units from the ends of the glycan chain. This Escherichia coli O127:H6 (strain E2348/69 / EPEC) protein is Endo-type membrane-bound lytic murein transglycosylase A.